The chain runs to 368 residues: tRNA-specific 2-thiouridylase MnmA (368 aa).

ATP-binding positions include 11-18 (GMSGGVDS) and Met-37. The segment at 97 to 99 (NPD) is interaction with target base in tRNA. Catalysis depends on Cys-102, which acts as the Nucleophile. A disulfide bridge connects residues Cys-102 and Cys-199. ATP is bound at residue Gly-127. Positions 149–151 (KDQ) are interaction with tRNA. Cys-199 (cysteine persulfide intermediate) is an active-site residue. The segment at 311–312 (RY) is interaction with tRNA.

Belongs to the MnmA/TRMU family.

It localises to the cytoplasm. The catalysed reaction is S-sulfanyl-L-cysteinyl-[protein] + uridine(34) in tRNA + AH2 + ATP = 2-thiouridine(34) in tRNA + L-cysteinyl-[protein] + A + AMP + diphosphate + H(+). Functionally, catalyzes the 2-thiolation of uridine at the wobble position (U34) of tRNA, leading to the formation of s(2)U34. This is tRNA-specific 2-thiouridylase MnmA from Baumannia cicadellinicola subsp. Homalodisca coagulata.